Reading from the N-terminus, the 426-residue chain is Lipid droplet localized protein (426 aa).

A helical transmembrane segment spans residues 278–298 (FYGYLIGLWIMFLSIFVKYPF).

It belongs to the saccharopine dehydrogenase family.

It is found in the membrane. The protein localises to the lipid droplet. This Caenorhabditis elegans protein is Lipid droplet localized protein.